A 217-amino-acid polypeptide reads, in one-letter code: Elongation factor Ts (217 aa).

An involved in Mg(2+) ion dislocation from EF-Tu region spans residues 82 to 85; sequence TDFV.

Belongs to the EF-Ts family.

Its subcellular location is the cytoplasm. Its function is as follows. Associates with the EF-Tu.GDP complex and induces the exchange of GDP to GTP. It remains bound to the aminoacyl-tRNA.EF-Tu.GTP complex up to the GTP hydrolysis stage on the ribosome. This chain is Elongation factor Ts, found in Desulfitobacterium hafniense (strain DSM 10664 / DCB-2).